A 292-amino-acid chain; its full sequence is Putative ribonuclease 3 (292 aa).

The region spanning 32-158 is the RNase III domain; it reads LGMSDEYIPY…FFGATEWLID (127 aa). The DRBM domain occupies 204–276; that stretch reads DAKTRFNEVI…ASRALETLAL (73 aa).

It belongs to the IIV-6 142R family.

It carries out the reaction Endonucleolytic cleavage to 5'-phosphomonoester.. Digests double-stranded RNA. This is Putative ribonuclease 3 from Acheta domesticus (House cricket).